Here is a 185-residue protein sequence, read N- to C-terminus: Ribosome-recycling factor (185 aa).

It belongs to the RRF family.

It localises to the cytoplasm. Responsible for the release of ribosomes from messenger RNA at the termination of protein biosynthesis. May increase the efficiency of translation by recycling ribosomes from one round of translation to another. This Shewanella sediminis (strain HAW-EB3) protein is Ribosome-recycling factor.